We begin with the raw amino-acid sequence, 495 residues long: Cysteine-rich secretory protein LCCL domain-containing 2 (495 aa).

An N-terminal signal peptide occupies residues methionine 1 to alanine 22. Residue asparagine 27 is glycosylated (N-linked (GlcNAc...) asparagine). Residues leucine 60 to tyrosine 200 enclose the SCP domain. LCCL domains lie at methionine 282–phenylalanine 377 and threonine 383–asparagine 486. Intrachain disulfides connect cysteine 288-cysteine 306, cysteine 310-cysteine 330, cysteine 389-cysteine 411, and cysteine 415-cysteine 438.

As to quaternary structure, binds to heparin, dermatan sulfate and chondroitin sulfate. In terms of tissue distribution, present in kidney renal tubules (at protein level).

Its subcellular location is the secreted. Promotes matrix assembly. This Mus musculus (Mouse) protein is Cysteine-rich secretory protein LCCL domain-containing 2 (Crispld2).